Reading from the N-terminus, the 154-residue chain is Anaerobic ribonucleoside-triphosphate reductase-activating protein (154 aa).

Residues cysteine 26, cysteine 30, and cysteine 33 each coordinate [4Fe-4S] cluster. Residues 32-34 (GCY) and glycine 74 each bind S-adenosyl-L-methionine.

Belongs to the organic radical-activating enzymes family. Forms a tetramer composed of two NrdD and two NrdG subunits. [4Fe-4S] cluster is required as a cofactor.

The protein localises to the cytoplasm. The catalysed reaction is glycyl-[protein] + reduced [flavodoxin] + S-adenosyl-L-methionine = glycin-2-yl radical-[protein] + semiquinone [flavodoxin] + 5'-deoxyadenosine + L-methionine + H(+). Functionally, activation of anaerobic ribonucleoside-triphosphate reductase under anaerobic conditions by generation of an organic free radical, using S-adenosylmethionine and reduced flavodoxin as cosubstrates to produce 5'-deoxy-adenosine. The chain is Anaerobic ribonucleoside-triphosphate reductase-activating protein (nrdG) from Salmonella typhi.